Here is a 446-residue protein sequence, read N- to C-terminus: Divalent metal cation transporter MntH (446 aa).

The next 11 helical transmembrane spans lie at Leu32–Ile52, Ala59–Leu79, Ala107–Ile127, Ile139–Met159, Ala168–Ser188, Ile205–Pro225, Ser264–Val284, Pro303–Ala323, Leu355–Asn375, Gln381–Leu401, and Val420–Ile440.

This sequence belongs to the NRAMP family.

It localises to the cell membrane. Functionally, h(+)-stimulated, divalent metal cation uptake system. The chain is Divalent metal cation transporter MntH from Staphylococcus haemolyticus (strain JCSC1435).